An 84-amino-acid chain; its full sequence is Small ribosomal subunit protein bS20 (84 aa).

It belongs to the bacterial ribosomal protein bS20 family.

In terms of biological role, binds directly to 16S ribosomal RNA. This is Small ribosomal subunit protein bS20 from Latilactobacillus sakei subsp. sakei (strain 23K) (Lactobacillus sakei subsp. sakei).